Reading from the N-terminus, the 204-residue chain is Tat proofreading chaperone DmsD (204 aa).

It belongs to the TorD/DmsD family. DmsD subfamily.

In terms of biological role, required for biogenesis/assembly of DMSO reductase, but not for the interaction of the DmsA signal peptide with the Tat system. May be part of a chaperone cascade complex that facilitates a folding-maturation pathway for the substrate protein. This Salmonella typhi protein is Tat proofreading chaperone DmsD.